The sequence spans 379 residues: Type II methyltransferase M.SsoII (379 aa).

Positions 9-66 (IKEKRERLHMTQKEFADALGLSKYGDRTIRRWERGETKPTGAELKAVIDFPDTPPYPN) constitute an HTH cro/C1-type domain. The region spanning 72 to 379 (YRMIDLFAGI…AEKIISTLDS (308 aa)) is the SAM-dependent MTase C5-type domain. Cys142 is an active-site residue.

It belongs to the class I-like SAM-binding methyltransferase superfamily. C5-methyltransferase family.

The enzyme catalyses a 2'-deoxycytidine in DNA + S-adenosyl-L-methionine = a 5-methyl-2'-deoxycytidine in DNA + S-adenosyl-L-homocysteine + H(+). A methylase that recognizes the double-stranded sequence 5'-CCNGG-3', methylates C-2 on both strands, and protects the DNA from cleavage by the SsoII endonuclease. This chain is Type II methyltransferase M.SsoII (ssoIIM), found in Shigella sonnei.